The sequence spans 306 residues: Tricarboxylate transporter FUM11 (306 aa).

Solcar repeat units lie at residues 18-98 (SDTL…YQKL), 109-195 (FGIL…LKQV), and 206-292 (IGTV…VVEG). 6 helical membrane-spanning segments follow: residues 24–44 (LVAG…AEFA), 67–87 (GLQW…KTSI), 113–133 (LAGF…SERI), 170–189 (GFWP…LGSY), 209–229 (VKTF…TQPL), and 267–286 (GAVA…FMVY).

Belongs to the mitochondrial carrier (TC 2.A.29) family.

The protein resides in the mitochondrion inner membrane. The protein operates within mycotoxin biosynthesis. Its function is as follows. Tricarboxylate transporter; part of the gene cluster that mediates the biosynthesis of fumonisins B1 (FB1), B2 (FB2), B3 (FB3), and B4 (FB4), which are carcinogenic mycotoxins. Within the pathway, FUM11 is involved the addition of the tricarballylic moieties to the carbon backbone. FUM11 makes a tricarboxylic acid precursor available for fumonisin biosynthesis via its export from the mitochondria. The biosynthesis starts with the FUM1-catalyzed carbon chain assembly from one molecule of acetyl-CoA, eight molecules of malonyl-CoA, and two molecules of methionine (in S-adenosyl form). The C18 polyketide chain is released from the enzyme by a nucleophilic attack of a carbanion, which is derived from R-carbon of alanine by decarboxylation, on the carbonyl carbon of polyketide acyl chain. This step is catalyzed by the pyridoxal 5'-phosphate-dependent aminoacyl transferase FUM8. The resultant 3-keto intermediate is then stereospecifically reduced to a 3-hydroxyl product by reductase FUM13. Subsequent oxidations at C-10 by the cytochrome P450 monooxygenase FUM2, C-14 and C-15 by FUM6, FUM12 or FUM15, tricarballylic esterification of the hydroxyl groups on C-14 and C-15 by acyltransferase FUM14, and C-5 hydroxylation by 2-keto-glutarate-dependent dioxygenase FUM3 furnish the biosynthesis of fumonisins. The tricarballylic moieties are most likely derived from the citric acid cycle, and their addition to the carbon backbone may involve FUM7, FUM10, FUM11 and FUM14. The protein is Tricarboxylate transporter FUM11 of Gibberella moniliformis (strain M3125 / FGSC 7600) (Maize ear and stalk rot fungus).